A 209-amino-acid polypeptide reads, in one-letter code: HTLV-1 basic zipper factor (209 aa).

The disordered stretch occupies residues 48 to 162; that stretch reads DGLLSLEEES…SARKEKMQEL (115 aa). Composition is skewed to basic and acidic residues over residues 70 to 87 and 94 to 114; these read APPR…AEEK and REKE…EEKA. Residues 87-92 carry the Nuclear localization signal 1 motif; sequence KRKRKK. Short sequence motifs (nuclear localization signal) lie at residues 116–120 and 137–141; these read RRRRA and RRERK. Residues 122–160 are compositionally biased toward basic and acidic residues; the sequence is KKAADVARRKQEEQERRERKWRQGAEKAKQHSARKEKMQ.

It belongs to the HTLV-1 HBZ protein family. In terms of assembly, interacts with host ATF4; this interaction inhibits viral RNA transcriptional activation by preventing ATF4 binding to Tax-responsive elements. Interacts with host CREB1; this interaction inhibits host CREB1 transcriptional activity. Interacts with host JUN, JUNB and JUND. Interacts with host EP300.

It localises to the host nucleus. Contributes to the regulation of viral RNA transcription by interacting with host proteins involved in transcriptional activation such as ATF4, or CREB1, and by inhibiting their activity. Additionally, HBZ suppresses host NF-kappa-B-driven transcription mediated by host RELA as well as transcription of some classical NF-kappa-B target genes, including IL8, IL2RA, IRF4, VCAM1, and VEGFA. In Homo sapiens (Human), this protein is HTLV-1 basic zipper factor (HBZ).